A 224-amino-acid chain; its full sequence is (S)-2-haloacid dehalogenase H-109 (224 aa).

The active-site Nucleophile is aspartate 10. An (S)-2-haloacid is bound by residues 11–12, arginine 41, and 118–119; these read LY and SN. The segment at 175 to 180 is important for catalytic activity; that stretch reads SSNSWD.

The protein belongs to the HAD-like hydrolase superfamily. S-2-haloalkanoic acid dehalogenase family.

It carries out the reaction an (S)-2-haloacid + H2O = a (2R)-2-hydroxycarboxylate + a halide anion + H(+). It catalyses the reaction (S)-2-chloropropanoate + H2O = (R)-lactate + chloride + H(+). Its function is as follows. Catalyzes the hydrolytic dehalogenation of small (S)-2-haloalkanoic acids to yield the corresponding (R)-2-hydroxyalkanoic acids. Acts on acids of short chain lengths, C(2) to C(4), with inversion of configuration at C-2. Active with 2-halogenated carboxylic acids and converts only the S-isomer (or L-isomer) of 2-chloropropionic acid with inversion of configuration to produce R-lactate (or D-isomer). In Pseudomonas putida (Arthrobacter siderocapsulatus), this protein is (S)-2-haloacid dehalogenase H-109.